The following is a 398-amino-acid chain: Cytochrome b561 and DOMON domain-containing protein At3g61750 (398 aa).

A signal peptide spans 1–23 (MKTLVGFYILCFLIGQDLPFLAA). One can recognise a DOMON domain in the interval 64–177 (NTFVLRYSEN…PRRAVILAFS (114 aa)). The region spanning 184–377 (LGRLTKHDDK…LEIFRIRGTI (194 aa)) is the Cytochrome b561 domain. H220 contributes to the heme b binding site. Transmembrane regions (helical) follow at residues 222-242 (VMAI…ARYL) and 252-272 (LHIG…ILGI). Residues H253 and H285 each contribute to the heme b site. 3 helical membrane-spanning segments follow: residues 287–307 (GIGI…FARP), 320–340 (YHHW…VLGI), and 351–371 (KIGY…LEIF). Residue H321 coordinates heme b.

Requires heme b as cofactor.

It is found in the membrane. Its function is as follows. May act as a catecholamine-responsive trans-membrane electron transporter. This is Cytochrome b561 and DOMON domain-containing protein At3g61750 from Arabidopsis thaliana (Mouse-ear cress).